A 452-amino-acid chain; its full sequence is Phosphatidylinositol N-acetylglucosaminyltransferase GPI3 subunit (452 aa).

Residues 407–427 (LYLLCGIVEYMLFFLLEWLYP) traverse the membrane as a helical segment.

It belongs to the glycosyltransferase group 1 family. As to quaternary structure, component of the phosphatidylinositol N-acetylglucosaminyltransferase complex composed of at least GPI1, GPI2, GPI3, GPI15, GPI19 and ERI1.

It is found in the endoplasmic reticulum membrane. It carries out the reaction a 1,2-diacyl-sn-glycero-3-phospho-(1D-myo-inositol) + UDP-N-acetyl-alpha-D-glucosamine = a 6-(N-acetyl-alpha-D-glucosaminyl)-1-(1,2-diacyl-sn-glycero-3-phospho)-1D-myo-inositol + UDP + H(+). It participates in glycolipid biosynthesis; glycosylphosphatidylinositol-anchor biosynthesis. Inhibited by Ras, probably via the interaction between RAS2 and ERI1. In terms of biological role, catalytic subunit in the complex catalyzing the transfer of N-acetylglucosamine from UDP-N-acetylglucosamine to phosphatidylinositol, the first step of GPI biosynthesis. The chain is Phosphatidylinositol N-acetylglucosaminyltransferase GPI3 subunit (SPT14) from Saccharomyces cerevisiae (strain RM11-1a) (Baker's yeast).